We begin with the raw amino-acid sequence, 202 residues long: MQTSLVIEALMESLRHLPGVGPKSAQRMAFYLLQSDRSKGIRLAESLLKAMSEIGHCGVCRTFTEQPCCDICSNVYREKMGQICVVESPSDICAIEQTGQFSGRYFVLMGRLSPLDGIGPDDIGLPLLEHRLSTEPIKEVILAMNPTVEGEATSNYIAQMCEEYGISTTKIAHGVPIGGDLEMVDETTLSHALVGRRPMNFN.

The segment at 57–72 adopts a C4-type zinc-finger fold; that stretch reads CGVCRTFTEQPCCDIC. The 96-residue stretch at 81 to 176 folds into the Toprim domain; sequence GQICVVESPS…STTKIAHGVP (96 aa).

It belongs to the RecR family.

In terms of biological role, may play a role in DNA repair. It seems to be involved in an RecBC-independent recombinational process of DNA repair. It may act with RecF and RecO. This is Recombination protein RecR from Hamiltonella defensa subsp. Acyrthosiphon pisum (strain 5AT).